A 399-amino-acid chain; its full sequence is Phosphoglycerate kinase (399 aa).

Substrate contacts are provided by residues 22 to 24 (DFN), Arg-38, 61 to 64 (HLGR), Arg-120, and Arg-153. ATP contacts are provided by residues Lys-204, Glu-326, and 352–355 (GGDT).

The protein belongs to the phosphoglycerate kinase family. As to quaternary structure, monomer.

It is found in the cytoplasm. The enzyme catalyses (2R)-3-phosphoglycerate + ATP = (2R)-3-phospho-glyceroyl phosphate + ADP. It functions in the pathway carbohydrate degradation; glycolysis; pyruvate from D-glyceraldehyde 3-phosphate: step 2/5. This chain is Phosphoglycerate kinase, found in Pelobacter propionicus (strain DSM 2379 / NBRC 103807 / OttBd1).